A 330-amino-acid polypeptide reads, in one-letter code: Fructose-1,6-bisphosphatase class 1 (330 aa).

Residues Glu78, Asp97, Leu99, and Asp100 each coordinate Mg(2+). Substrate is bound by residues 100 to 103 (DGSS) and Asn188. Glu260 contributes to the Mg(2+) binding site.

This sequence belongs to the FBPase class 1 family. As to quaternary structure, homotetramer. Requires Mg(2+) as cofactor.

The protein resides in the cytoplasm. The enzyme catalyses beta-D-fructose 1,6-bisphosphate + H2O = beta-D-fructose 6-phosphate + phosphate. Its pathway is carbohydrate biosynthesis; gluconeogenesis. The sequence is that of Fructose-1,6-bisphosphatase class 1 from Paracoccus denitrificans (strain Pd 1222).